We begin with the raw amino-acid sequence, 150 residues long: Large ribosomal subunit protein bL9 (150 aa).

It belongs to the bacterial ribosomal protein bL9 family.

In terms of biological role, binds to the 23S rRNA. The sequence is that of Large ribosomal subunit protein bL9 from Alteromonas mediterranea (strain DSM 17117 / CIP 110805 / LMG 28347 / Deep ecotype).